Here is a 266-residue protein sequence, read N- to C-terminus: PDZ domain-containing protein 9 (266 aa).

The region spanning 27–109 (KVIQTKLTVG…GTVLQIKAYR (83 aa)) is the PDZ domain.

In Mus musculus (Mouse), this protein is PDZ domain-containing protein 9 (Pdzd9).